A 414-amino-acid chain; its full sequence is Multifunctional CCA protein (414 aa).

ATP contacts are provided by Gly8 and Arg11. 2 residues coordinate CTP: Gly8 and Arg11. Mg(2+) is bound by residues Glu21 and Asp23. ATP contacts are provided by Arg91, Arg137, and Arg140. CTP-binding residues include Arg91, Arg137, and Arg140. Positions 228 to 329 (TGIHTMMTVA…LKLFDAIDVW (102 aa)) constitute an HD domain.

Belongs to the tRNA nucleotidyltransferase/poly(A) polymerase family. Bacterial CCA-adding enzyme type 1 subfamily. Monomer. Can also form homodimers and oligomers. It depends on Mg(2+) as a cofactor. Requires Ni(2+) as cofactor.

It catalyses the reaction a tRNA precursor + 2 CTP + ATP = a tRNA with a 3' CCA end + 3 diphosphate. It carries out the reaction a tRNA with a 3' CCA end + 2 CTP + ATP = a tRNA with a 3' CCACCA end + 3 diphosphate. Catalyzes the addition and repair of the essential 3'-terminal CCA sequence in tRNAs without using a nucleic acid template. Adds these three nucleotides in the order of C, C, and A to the tRNA nucleotide-73, using CTP and ATP as substrates and producing inorganic pyrophosphate. tRNA 3'-terminal CCA addition is required both for tRNA processing and repair. Also involved in tRNA surveillance by mediating tandem CCA addition to generate a CCACCA at the 3' terminus of unstable tRNAs. While stable tRNAs receive only 3'-terminal CCA, unstable tRNAs are marked with CCACCA and rapidly degraded. The polypeptide is Multifunctional CCA protein (Pectobacterium carotovorum subsp. carotovorum (strain PC1)).